The primary structure comprises 336 residues: MSKAFNNLAFDIMTAVSFDTDFNTMEKPEYRFALKAIEDSNVRLGVLLQAPELSVRSLDKKLFPTAYVAKYKFVKFIRMVMAKRLAASKATSKDIFSFLQDCKDPDSGKELSIAELSTETATFIVAGADTSSTSMAAVSHYITGSSNCYRRVAEEVRSTFCSVDEICLGPKLNSCAFLRACIDEALRLSPPGGSALWREVEQGGTLIDGTYVPGHCEVAVGIYSIHHSAAYYTKPFTYDPERWYRPLDAKGSRSEAPRSPYMPFSVGPRSCVGKPLAIAQMMIVFARLLWEYDMRRADYKSDWAEGDYSSTEYALKDHLTAWKEGPVLRFSPRLKP.

Cysteine 271 lines the heme pocket.

This sequence belongs to the cytochrome P450 family. Requires heme as cofactor.

The protein operates within secondary metabolite biosynthesis. In terms of biological role, cytochrome P450 monooxygenase; part of the gene cluster that mediates the biosynthesis of the lipopeptide antibiotics leucinostatins that show extensive biological activities, including antimalarial, antiviral, antibacterial, antifungal, and antitumor activities, as well as phytotoxic. Leucinostatin A contains nine amino acid residues, including the unusual amino acid 4-methyl-L-proline (MePro), 2-amino-6-hydroxy-4-methyl-8-oxodecanoic acid (AHyMeOA), 3-hydroxyleucine (HyLeu), alpha-aminoisobutyric acid (AIB), beta-Ala, a 4-methylhex-2-enoic acid at the N-terminus as well as a N1,N1-dimethylpropane-1,2-diamine (DPD) at the C-terminus. The biosynthesis of leucinostatins is probably initiated with the assembly of 4-methylhex-2-enoic acid by a reducing PKS. Two reducing polyketide synthases, lcsB and lcsC, have been identified in the cluster and it is not clear which is the one that assembles 4-methylhex-2-enoic acid since both contain KS, AT, DH, cMT, ER, KR and ACP domains. The polyketide residue might be transferred to the NRPS lcsA, mediated by two additional enzymes, the acyl-CoA ligase lcsD and the thioesterase lcsE. The linear polyketide carboxylic acid, which is released from PKS, is converted to a CoA thioester by lcsD, and then lcsE hydrolyzes the thiol bond and shuttles the polyketide intermediate to lcsA. The C domain of the first module catalyzed the condensation of 4-methylhex-2-enoic acid and MePro carried by domain A1, followed by successive condensations of nine amino acids to trigger the elongation of the linear peptide. A5 and A6 domains of lcsA are proposed to incorporate leucine, A2 AHyMeOA, and A3 incorporates HyLeu. A4, A7 and A8 incorporate AIB. The AHyMeOA in leucinostatin A activated by the A2 might be produced by the second PKS (lcsB or lcsC) present within the cluster. The MePro is probably produced via leucine cyclization and may originate from a separate pathway, independent of the cluster. Another nonproteinogenic amino acid, beta-Ala, could be produced by an aspartic acid decarboxylase also localized outside of the cluster. Two candidates are VFPBJ_01400 and VFPBJ_10476. The final peptide scaffold may be released by the NAD(P)H-dependent thioester reductase (TE) at the C-terminal region of lcsA. Transamination of the lcsA product by the transaminase lcsP may produce DPD at the C-terminus. Further hydroxylation steps performed alternatively by the cytochrome P450 monooxygenases lcsI, lcsK and lcsN then yield the non-methylated leucinostatins precursor. It is also possible that leucines can be hydroxylated prior to their incorporation into the peptide. Varying extents of methylation then lead to the formation of leucinostatins A and B. In Purpureocillium lilacinum (Paecilomyces lilacinus), this protein is Cytochrome P450 monooxygenase lcsN.